Consider the following 348-residue polypeptide: Phosphate acyltransferase (348 aa).

Belongs to the PlsX family. As to quaternary structure, homodimer. Probably interacts with PlsY.

It is found in the cytoplasm. The enzyme catalyses a fatty acyl-[ACP] + phosphate = an acyl phosphate + holo-[ACP]. Its pathway is lipid metabolism; phospholipid metabolism. Its function is as follows. Catalyzes the reversible formation of acyl-phosphate (acyl-PO(4)) from acyl-[acyl-carrier-protein] (acyl-ACP). This enzyme utilizes acyl-ACP as fatty acyl donor, but not acyl-CoA. The sequence is that of Phosphate acyltransferase from Francisella tularensis subsp. tularensis (strain FSC 198).